A 259-amino-acid chain; its full sequence is GDP-perosamine N-formyltransferase (259 aa).

(6S)-5,6,7,8-tetrahydrofolate contacts are provided by residues 89–91 and 139–143; these read SLI and DENFD.

Belongs to the Fmt family. In terms of assembly, homodimer.

It carries out the reaction GDP-alpha-D-perosamine + (6R)-10-formyltetrahydrofolate = GDP-N-formyl-alpha-D-perosamine + (6S)-5,6,7,8-tetrahydrofolate + H(+). Its pathway is bacterial outer membrane biogenesis; lipopolysaccharide biosynthesis. Involved in the lipopolysaccharide (LPS) O-antigen biosynthesis. Catalyzes the transfer of a formyl group to GDP-perosamine, leading to the formation of GDP-N-formylperosamine. Is critical for full bacterial virulence. This Brucella abortus (strain 2308) protein is GDP-perosamine N-formyltransferase.